Here is a 179-residue protein sequence, read N- to C-terminus: tRNA (cytidine(56)-2'-O)-methyltransferase (179 aa).

Residues Leu82, 112–116 (GAEKV), and 130–137 (VGNQPHSE) each bind S-adenosyl-L-methionine.

This sequence belongs to the aTrm56 family. Homodimer.

The protein resides in the cytoplasm. It carries out the reaction cytidine(56) in tRNA + S-adenosyl-L-methionine = 2'-O-methylcytidine(56) in tRNA + S-adenosyl-L-homocysteine + H(+). Its function is as follows. Specifically catalyzes the AdoMet-dependent 2'-O-ribose methylation of cytidine at position 56 in tRNAs. This chain is tRNA (cytidine(56)-2'-O)-methyltransferase, found in Methanococcus maripaludis (strain C7 / ATCC BAA-1331).